A 37-amino-acid chain; its full sequence is Conotoxin r11e (37 aa).

Cystine bridges form between Cys2–Cys16, Cys9–Cys21, Cys15–Cys26, and Cys20–Cys33. 4-carboxyglutamate is present on residues Glu13 and Glu14. A 6'-bromotryptophan modification is found at Trp34.

Expressed by the venom duct.

It localises to the secreted. Its function is as follows. Causes hyperactivity, circular motion, convulsion, urination and death, when injected into 13- to 15-day-old mice. Causes gasping, backward swimming or swimming in a vertical direction and death, when intraperitoneally injected into goldfish. This is Conotoxin r11e from Conus radiatus (Rayed cone).